Reading from the N-terminus, the 352-residue chain is B1 bradykinin receptor (352 aa).

Residues 1–41 (MASWPPLQLQSSNQSQLFPQNATACDNAPEAWDLLHRVLPT) lie on the Extracellular side of the membrane. Asparagine 13 and asparagine 21 each carry an N-linked (GlcNAc...) asparagine glycan. The chain crosses the membrane as a helical span at residues 42–62 (FIISICSFGLLGNLFVLLVFL). The Cytoplasmic segment spans residues 63–72 (LPRRRLNVAE). Residues 73-93 (IYLANLAASDLVFVLGLPFWA) form a helical membrane-spanning segment. At 94–110 (ENIWNQFNWPFGALLCR) the chain is on the extracellular side. A disulfide bridge connects residues cysteine 109 and cysteine 188. A helical membrane pass occupies residues 111-131 (VINGIIKANLFISIFLVVAIS). Residues 132 to 153 (QDRYCVLVHPMASRRRQRRRQA) are Cytoplasmic-facing. The helical transmembrane segment at 154 to 174 (RVTCVLIWVVGGLLSIPTFLL) threads the bilayer. The Extracellular segment spans residues 175 to 206 (RSIQAVPDLNITACILLLPHEAWHFARIVELN). Asparagine 184 carries an N-linked (GlcNAc...) asparagine glycan. The chain crosses the membrane as a helical span at residues 207 to 227 (ILAFLLPLAAIIFFNYHILAS). The Cytoplasmic segment spans residues 228–250 (LRGREEVSRTRCGGSKDSKTTAL). The chain crosses the membrane as a helical span at residues 251–271 (ILTLVVAFLVCWAPYHFFAFL). At 272–294 (EFLFQVQAVRGCFWEDFIDLGLQ) the chain is on the extracellular side. The chain crosses the membrane as a helical span at residues 295-315 (LANFLAFTNSSLNPVIYVFAG). The Cytoplasmic segment spans residues 316 to 352 (RLFRTKVWELYKQCTPKSLAPISSSHRKEIFQLFWRN). A lipid anchor (S-palmitoyl cysteine) is attached at cysteine 329.

Belongs to the G-protein coupled receptor 1 family. Bradykinin receptor subfamily. BDKRB1 sub-subfamily.

The protein resides in the cell membrane. This is a receptor for bradykinin. Could be a factor in chronic pain and inflammation. This is B1 bradykinin receptor (BDKRB1) from Macaca fascicularis (Crab-eating macaque).